The sequence spans 500 residues: Cysteine--tRNA ligase (500 aa).

Zn(2+) is bound at residue cysteine 29. Positions 31 to 41 (VTVYDLCHLGH) match the 'HIGH' region motif. Cysteine 213, histidine 238, and glutamate 242 together coordinate Zn(2+). The 'KMSKS' region motif lies at 270–274 (KMSKS). Position 273 (lysine 273) interacts with ATP.

The protein belongs to the class-I aminoacyl-tRNA synthetase family. As to quaternary structure, monomer. It depends on Zn(2+) as a cofactor.

It is found in the cytoplasm. It catalyses the reaction tRNA(Cys) + L-cysteine + ATP = L-cysteinyl-tRNA(Cys) + AMP + diphosphate. This is Cysteine--tRNA ligase from Prochlorococcus marinus (strain NATL1A).